We begin with the raw amino-acid sequence, 455 residues long: D-inositol 3-phosphate glycosyltransferase (455 aa).

Positions 1-25 (MSQHVSRLGGLRGRSHGHGAFGGPY) are disordered. Position 45 (His-45) interacts with 1D-myo-inositol 3-phosphate. UDP-N-acetyl-alpha-D-glucosamine contacts are provided by residues 51–52 (QP) and Gly-59. Residues 56 to 61 (DAGGMN), Lys-114, Tyr-147, Thr-171, and Arg-191 each bind 1D-myo-inositol 3-phosphate. UDP-N-acetyl-alpha-D-glucosamine contacts are provided by Arg-266 and Lys-271. Residues Tyr-341, Arg-342, and Ala-344 each contribute to the Mg(2+) site. UDP-N-acetyl-alpha-D-glucosamine is bound by residues Glu-354 and Glu-362. Position 368 (Thr-368) interacts with Mg(2+).

This sequence belongs to the glycosyltransferase group 1 family. MshA subfamily. Homodimer.

It catalyses the reaction 1D-myo-inositol 3-phosphate + UDP-N-acetyl-alpha-D-glucosamine = 1D-myo-inositol 2-acetamido-2-deoxy-alpha-D-glucopyranoside 3-phosphate + UDP + H(+). Its function is as follows. Catalyzes the transfer of a N-acetyl-glucosamine moiety to 1D-myo-inositol 3-phosphate to produce 1D-myo-inositol 2-acetamido-2-deoxy-glucopyranoside 3-phosphate in the mycothiol biosynthesis pathway. The protein is D-inositol 3-phosphate glycosyltransferase of Streptomyces bingchenggensis (strain BCW-1).